The primary structure comprises 557 residues: 2-succinyl-5-enolpyruvyl-6-hydroxy-3-cyclohexene-1-carboxylate synthase (557 aa).

It belongs to the TPP enzyme family. MenD subfamily. Homodimer. Requires Mg(2+) as cofactor. Mn(2+) serves as cofactor. The cofactor is thiamine diphosphate.

It catalyses the reaction isochorismate + 2-oxoglutarate + H(+) = 5-enolpyruvoyl-6-hydroxy-2-succinyl-cyclohex-3-ene-1-carboxylate + CO2. Its pathway is quinol/quinone metabolism; 1,4-dihydroxy-2-naphthoate biosynthesis; 1,4-dihydroxy-2-naphthoate from chorismate: step 2/7. It participates in quinol/quinone metabolism; menaquinone biosynthesis. Functionally, catalyzes the thiamine diphosphate-dependent decarboxylation of 2-oxoglutarate and the subsequent addition of the resulting succinic semialdehyde-thiamine pyrophosphate anion to isochorismate to yield 2-succinyl-5-enolpyruvyl-6-hydroxy-3-cyclohexene-1-carboxylate (SEPHCHC). This Staphylococcus aureus (strain Mu3 / ATCC 700698) protein is 2-succinyl-5-enolpyruvyl-6-hydroxy-3-cyclohexene-1-carboxylate synthase.